A 338-amino-acid polypeptide reads, in one-letter code: MTTLRLLISDSYDPWFNLAVEECIFRQMPATQRVLFLWRNADTVVIGRAQNPWKECNTRRMEEDNVRLARRSSGGGAVFHDLGNTCFTFMAGKPEYDKTISTHIVLAALNSLGVMADASGRNDLVVKTPDGDRKVSGSAYRETKDRGFHHGTLLLNADLSRLANYLNPDKKKLAAKGITSVRSRVANLTELLPGITHEQVCQAVTEAFFAHYGERVDAEVISPDKTPDLPNFAETFARQSSWEWNFGQAPAFSHLLDERFTWGGVELHFDVEKGVITRAQAFTDSLNPAPLEALGERLQGCQYRVDVLEQACESLIAEFPAQKGELRELAAWMAQAVR.

The 188-residue stretch at 29 to 216 (PATQRVLFLW…AFFAHYGERV (188 aa)) folds into the BPL/LPL catalytic domain. Residues arginine 71, 76–79 (GAVF), and lysine 134 each bind ATP. Residue lysine 134 participates in (R)-lipoate binding.

The protein belongs to the LplA family. Monomer.

The protein resides in the cytoplasm. It catalyses the reaction L-lysyl-[lipoyl-carrier protein] + (R)-lipoate + ATP = N(6)-[(R)-lipoyl]-L-lysyl-[lipoyl-carrier protein] + AMP + diphosphate + H(+). Its pathway is protein modification; protein lipoylation via exogenous pathway; protein N(6)-(lipoyl)lysine from lipoate: step 1/2. It participates in protein modification; protein lipoylation via exogenous pathway; protein N(6)-(lipoyl)lysine from lipoate: step 2/2. Its function is as follows. Catalyzes both the ATP-dependent activation of exogenously supplied lipoate to lipoyl-AMP and the transfer of the activated lipoyl onto the lipoyl domains of lipoate-dependent enzymes. This Salmonella paratyphi B (strain ATCC BAA-1250 / SPB7) protein is Lipoate-protein ligase A.